Here is a 214-residue protein sequence, read N- to C-terminus: Inner membrane-spanning protein YciB (214 aa).

The next 5 membrane-spanning stretches (helical) occupy residues 11–31 (ILFFIAFKLYGIYVATAVAII), 50–70 (MHIITLALIVILGGATLILQD), 81–101 (VNWGFALVFLGSHFIGQKPII), 119–139 (LSYMWIAFFIFSGIANIYVAY), and 149–169 (FKLFGLMGLTLAFILIQGVYI).

Belongs to the YciB family.

The protein localises to the cell inner membrane. Its function is as follows. Plays a role in cell envelope biogenesis, maintenance of cell envelope integrity and membrane homeostasis. The polypeptide is Inner membrane-spanning protein YciB (Hydrogenovibrio crunogenus (strain DSM 25203 / XCL-2) (Thiomicrospira crunogena)).